The sequence spans 509 residues: UDP-N-acetylmuramoylalanine--D-glutamate ligase (509 aa).

Residue 116 to 122 participates in ATP binding; sequence GTNGKST.

This sequence belongs to the MurCDEF family.

It localises to the cytoplasm. It carries out the reaction UDP-N-acetyl-alpha-D-muramoyl-L-alanine + D-glutamate + ATP = UDP-N-acetyl-alpha-D-muramoyl-L-alanyl-D-glutamate + ADP + phosphate + H(+). It participates in cell wall biogenesis; peptidoglycan biosynthesis. In terms of biological role, cell wall formation. Catalyzes the addition of glutamate to the nucleotide precursor UDP-N-acetylmuramoyl-L-alanine (UMA). This chain is UDP-N-acetylmuramoylalanine--D-glutamate ligase, found in Wolbachia pipientis wMel.